Here is a 177-residue protein sequence, read N- to C-terminus: Large ribosomal subunit protein uL6 (177 aa).

The protein belongs to the universal ribosomal protein uL6 family. As to quaternary structure, part of the 50S ribosomal subunit.

In terms of biological role, this protein binds to the 23S rRNA, and is important in its secondary structure. It is located near the subunit interface in the base of the L7/L12 stalk, and near the tRNA binding site of the peptidyltransferase center. The chain is Large ribosomal subunit protein uL6 from Vibrio parahaemolyticus serotype O3:K6 (strain RIMD 2210633).